The sequence spans 194 residues: MGVAPVSNQPLVAQQPKGIIDPSTGKPIGSNDPFFGEINNELADKGFLVTSTDELINWARTGSLMWMTFGLACCAVEMMQLSMPRYDVERFGFAPRASPRQSDVMIVAGTLTNKMAPALRKVYDQMPEPRYVISMGSCANGGGYYHYSYSVVRGCDRIVPIDIYVPGCPPTAEALLYGVLLLQKKIRRTGTIER.

C73, C74, C138, and C168 together coordinate [4Fe-4S] cluster.

It belongs to the complex I 20 kDa subunit family. As to quaternary structure, NDH-1 is composed of 14 different subunits. Subunits NuoB, C, D, E, F, and G constitute the peripheral sector of the complex. Requires [4Fe-4S] cluster as cofactor.

Its subcellular location is the cell inner membrane. The enzyme catalyses a quinone + NADH + 5 H(+)(in) = a quinol + NAD(+) + 4 H(+)(out). NDH-1 shuttles electrons from NADH, via FMN and iron-sulfur (Fe-S) centers, to quinones in the respiratory chain. The immediate electron acceptor for the enzyme in this species is believed to be ubiquinone. Couples the redox reaction to proton translocation (for every two electrons transferred, four hydrogen ions are translocated across the cytoplasmic membrane), and thus conserves the redox energy in a proton gradient. The chain is NADH-quinone oxidoreductase subunit B from Rhizobium johnstonii (strain DSM 114642 / LMG 32736 / 3841) (Rhizobium leguminosarum bv. viciae).